We begin with the raw amino-acid sequence, 296 residues long: Small ribosomal subunit protein uS2 (296 aa).

Residues 246–272 (QAKDGSVVDSGKGKSIAAHKGGGKASK) form a disordered region.

The protein belongs to the universal ribosomal protein uS2 family.

This Anaplasma phagocytophilum (strain HZ) protein is Small ribosomal subunit protein uS2.